We begin with the raw amino-acid sequence, 147 residues long: Small ribosomal subunit protein uS12 (147 aa).

This sequence belongs to the universal ribosomal protein uS12 family. Part of the 30S ribosomal subunit.

Functionally, with S4 and S5 plays an important role in translational accuracy. Located at the interface of the 30S and 50S subunits. This Methanococcus maripaludis (strain C5 / ATCC BAA-1333) protein is Small ribosomal subunit protein uS12.